Here is a 197-residue protein sequence, read N- to C-terminus: Small ribosomal subunit protein uS4B (197 aa).

Residues 88 to 151 (CRLDNIAYRI…RKNDEFADNF (64 aa)) form the S4 RNA-binding domain.

The protein belongs to the universal ribosomal protein uS4 family. In terms of assembly, part of the 30S ribosomal subunit. Contacts protein S5. The interaction surface between S4 and S5 is involved in control of translational fidelity.

Functionally, one of the primary rRNA binding proteins, it binds directly to 16S rRNA where it nucleates assembly of the body of the 30S subunit. Its function is as follows. With S5 and S12 plays an important role in translational accuracy. The protein is Small ribosomal subunit protein uS4B of Clostridium botulinum (strain Hall / ATCC 3502 / NCTC 13319 / Type A).